A 295-amino-acid chain; its full sequence is MVSELELKEIIGKVLKEMAVEGKTEGQAVTETKKTSESHIEDGIIDDITKEDLREIVELKNATNKEEFLKYKRKTPARLGISRAGSRYTTHTMLRLRADHAAAQDAVLSSVNEDFLKANNLFIVKSRCEDKDQYITRPDLGRRLDEESVKTLKEKCVQNPTVQVFVADGLSSTAIEANIEDCLPALLNGLKSYGISVGTPFFAKLARVGLADDVSEVLGAEVTCVLIGERPGLATAESMSAYITYKGYVGIPEAKRTVVSNIHVKGTPAAEAGAHIAHIIKKVLDAKASGQDLKL.

2 residues coordinate adenosylcob(III)alamin: V208 and E229.

This sequence belongs to the EutC family. As to quaternary structure, the basic unit is a heterodimer which dimerizes to form tetramers. The heterotetramers trimerize; 6 large subunits form a core ring with 6 small subunits projecting outwards. Requires adenosylcob(III)alamin as cofactor.

It localises to the bacterial microcompartment. It catalyses the reaction ethanolamine = acetaldehyde + NH4(+). It participates in amine and polyamine degradation; ethanolamine degradation. Catalyzes the deamination of various vicinal amino-alcohols to oxo compounds. Allows this organism to utilize ethanolamine as the sole source of nitrogen and carbon in the presence of external vitamin B12. The polypeptide is Ethanolamine ammonia-lyase small subunit (Fusobacterium nucleatum subsp. nucleatum (strain ATCC 25586 / DSM 15643 / BCRC 10681 / CIP 101130 / JCM 8532 / KCTC 2640 / LMG 13131 / VPI 4355)).